A 222-amino-acid polypeptide reads, in one-letter code: Germin-like protein subfamily 1 member 14 (222 aa).

An N-terminal signal peptide occupies residues 1–22 (MRFSKSLILITLSALVISFAEA). Cysteines 32 and 49 form a disulfide. In terms of domain architecture, Cupin type-1 spans 63 to 214 (SGLNQAGTTN…AFQLDVNVVK (152 aa)). N-linked (GlcNAc...) asparagine glycosylation is present at asparagine 78. Mn(2+)-binding residues include histidine 111, histidine 113, glutamate 118, and histidine 160.

It belongs to the germin family. Oligomer (believed to be a pentamer but probably hexamer).

The protein localises to the secreted. It is found in the extracellular space. It localises to the apoplast. Functionally, may play a role in plant defense. Probably has no oxalate oxidase activity even if the active site is conserved. The polypeptide is Germin-like protein subfamily 1 member 14 (Arabidopsis thaliana (Mouse-ear cress)).